The primary structure comprises 198 residues: Recombination protein RecR (198 aa).

Residues 57 to 72 (CSVCGHITENDPCYIC) form a C4-type zinc finger. Residues 80-175 (SVICVVEDDK…KVTRLAQGLS (96 aa)) form the Toprim domain.

The protein belongs to the RecR family.

Its function is as follows. May play a role in DNA repair. It seems to be involved in an RecBC-independent recombinational process of DNA repair. It may act with RecF and RecO. This is Recombination protein RecR from Staphylococcus aureus (strain Mu3 / ATCC 700698).